The sequence spans 119 residues: Histone H1B, sperm (119 aa).

In terms of domain architecture, H15 spans 8-77; it reads THPPVATAVV…QNKGSFRVNK (70 aa). Residues 76–119 form a disordered region; it reads NKTALPKKKKAAKKPKAKKVKKPKSAAKKKTNRARAPKTKKNRN. The span at 80 to 119 shows a compositional bias: basic residues; sequence LPKKKKAAKKPKAKKVKKPKSAAKKKTNRARAPKTKKNRN.

It belongs to the histone H1/H5 family.

Its subcellular location is the nucleus. The protein resides in the chromosome. Functionally, histones H1 are necessary for the condensation of nucleosome chains into higher-order structures. The sequence is that of Histone H1B, sperm from Platynereis dumerilii (Dumeril's clam worm).